An 84-amino-acid polypeptide reads, in one-letter code: Large ribosomal subunit protein bL31B (84 aa).

This sequence belongs to the bacterial ribosomal protein bL31 family. Type B subfamily. As to quaternary structure, part of the 50S ribosomal subunit.

This Streptomyces griseus subsp. griseus (strain JCM 4626 / CBS 651.72 / NBRC 13350 / KCC S-0626 / ISP 5235) protein is Large ribosomal subunit protein bL31B.